The chain runs to 200 residues: Interferon lambda-1 (200 aa).

Residues 1-19 (MAAAWTVVLVTLVLGLAVA) form the signal peptide. Asn65 carries an N-linked (GlcNAc...) asparagine glycan. Cys68 and Cys164 are joined by a disulfide.

The protein belongs to the lambda interferon family.

It is found in the secreted. Cytokine with antiviral, antitumour and immunomodulatory activities. Plays a critical role in the antiviral host defense, predominantly in the epithelial tissues. Acts as a ligand for the heterodimeric class II cytokine receptor composed of IL10RB and IFNLR1, and receptor engagement leads to the activation of the JAK/STAT signaling pathway resulting in the expression of IFN-stimulated genes (ISG), which mediate the antiviral state. Has a restricted receptor distribution and therefore restricted targets: is primarily active in epithelial cells and this cell type-selective action is because of the epithelial cell-specific expression of its receptor IFNLR1. Exerts an immunomodulatory effect by up-regulating MHC class I antigen expression. This chain is Interferon lambda-1 (IFNL1), found in Homo sapiens (Human).